Reading from the N-terminus, the 287-residue chain is Phosphoribosylaminoimidazole-succinocarboxamide synthase (287 aa).

It belongs to the SAICAR synthetase family.

The catalysed reaction is 5-amino-1-(5-phospho-D-ribosyl)imidazole-4-carboxylate + L-aspartate + ATP = (2S)-2-[5-amino-1-(5-phospho-beta-D-ribosyl)imidazole-4-carboxamido]succinate + ADP + phosphate + 2 H(+). It functions in the pathway purine metabolism; IMP biosynthesis via de novo pathway; 5-amino-1-(5-phospho-D-ribosyl)imidazole-4-carboxamide from 5-amino-1-(5-phospho-D-ribosyl)imidazole-4-carboxylate: step 1/2. This is Phosphoribosylaminoimidazole-succinocarboxamide synthase from Neisseria meningitidis serogroup A / serotype 4A (strain DSM 15465 / Z2491).